A 353-amino-acid chain; its full sequence is tRNA-specific 2-thiouridylase MnmA 2 (353 aa).

6–13 provides a ligand contact to ATP; it reads LLSGGVDS. The tract at residues 92–94 is interaction with target base in tRNA; that stretch reads NPD. The active-site Nucleophile is the cysteine 97. An intrachain disulfide couples cysteine 97 to cysteine 192. Glycine 120 is an ATP binding site. The segment at 142–144 is interaction with tRNA; sequence KDQ. The Cysteine persulfide intermediate role is filled by cysteine 192.

This sequence belongs to the MnmA/TRMU family.

It localises to the cytoplasm. It carries out the reaction S-sulfanyl-L-cysteinyl-[protein] + uridine(34) in tRNA + AH2 + ATP = 2-thiouridine(34) in tRNA + L-cysteinyl-[protein] + A + AMP + diphosphate + H(+). Functionally, catalyzes the 2-thiolation of uridine at the wobble position (U34) of tRNA, leading to the formation of s(2)U34. The chain is tRNA-specific 2-thiouridylase MnmA 2 from Bacteroides fragilis (strain ATCC 25285 / DSM 2151 / CCUG 4856 / JCM 11019 / LMG 10263 / NCTC 9343 / Onslow / VPI 2553 / EN-2).